We begin with the raw amino-acid sequence, 451 residues long: Signal recognition particle protein (451 aa).

GTP is bound by residues 107 to 114 (GLQGSGKT), 190 to 194 (DTAGR), and 248 to 251 (TKTD).

It belongs to the GTP-binding SRP family. SRP54 subfamily. As to quaternary structure, part of the signal recognition particle protein translocation system, which is composed of SRP and FtsY. SRP is a ribonucleoprotein composed of Ffh and a 4.5S RNA molecule.

The protein resides in the cytoplasm. It carries out the reaction GTP + H2O = GDP + phosphate + H(+). Its function is as follows. Involved in targeting and insertion of nascent membrane proteins into the cytoplasmic membrane. Binds to the hydrophobic signal sequence of the ribosome-nascent chain (RNC) as it emerges from the ribosomes. The SRP-RNC complex is then targeted to the cytoplasmic membrane where it interacts with the SRP receptor FtsY. Interaction with FtsY leads to the transfer of the RNC complex to the Sec translocase for insertion into the membrane, the hydrolysis of GTP by both Ffh and FtsY, and the dissociation of the SRP-FtsY complex into the individual components. In Buchnera aphidicola subsp. Acyrthosiphon pisum (strain APS) (Acyrthosiphon pisum symbiotic bacterium), this protein is Signal recognition particle protein.